Reading from the N-terminus, the 462-residue chain is DNA polymerase delta subunit 3 (462 aa).

Position 2 is an N-acetylalanine (Ala-2). Disordered stretches follow at residues 144–186 (APAE…ASQQ), 200–230 (TKTQ…PGKG), 254–384 (AVKE…RVLK), and 403–462 (SESC…FQKK). Over residues 156–174 (QSNLQAASEAQASELTTNG) the composition is skewed to polar residues. Over residues 204–215 (DTNKETKPEARE) the composition is skewed to basic and acidic residues. Residues 218-230 (SASSAGGKAPGKG) are compositionally biased toward low complexity. Lys-256 is covalently cross-linked (Glycyl lysine isopeptide (Lys-Gly) (interchain with G-Cter in SUMO); alternate). Lys-256 participates in a covalent cross-link: Glycyl lysine isopeptide (Lys-Gly) (interchain with G-Cter in SUMO2); alternate. Residue Lys-259 forms a Glycyl lysine isopeptide (Lys-Gly) (interchain with G-Cter in SUMO2) linkage. Residues 284 to 305 (RKSEPGKVQQKEKSSRGKRVDL) show a composition bias toward basic and acidic residues. Phosphoserine is present on Ser-306. Over residues 330–344 (SSEDEVFEDSPEMYE) the composition is skewed to acidic residues. Pro residues predominate over residues 348-368 (PSPPPVSPPPDPMPKTEPPPV). Phosphoserine is present on residues Ser-403 and Ser-405. Residue Thr-407 is modified to Phosphothreonine. At Ser-409 the chain carries Phosphoserine. Low complexity predominate over residues 416–427 (KPASAHKPPAAA). The segment covering 428–437 (VKREPREERK) has biased composition (basic and acidic residues). Lys-429 participates in a covalent cross-link: Glycyl lysine isopeptide (Lys-Gly) (interchain with G-Cter in SUMO); alternate. Lys-429 participates in a covalent cross-link: Glycyl lysine isopeptide (Lys-Gly) (interchain with G-Cter in SUMO2); alternate. Residues 451–462 (RQVSITGFFQKK) show a composition bias toward polar residues. A PIP-box motif is present at residues 452 to 459 (QVSITGFF). A Phosphoserine modification is found at Ser-454.

Component of both the DNA polymerase delta and DNA polymerase zeta complexes. The tetrameric DNA polymerase delta complex (Pol-delta4), which consists of POLD1/p125, POLD2/p50, POLD3/p66/p68 and POLD4/p12, with POLD1 bearing DNA polymerase and 3' to 5' proofreading exonuclease activities. Within this complex, directly interacts with POLD2. Following stress caused by DNA damaging agents or by replication stress, POLD4 is degraded and Pol-delta4 is converted into a trimeric form of the complex (Pol-delta3), which consists of POLD1, POLD2 and POLD3. Pol-delta3 is the major form occurring at S phase replication sites, as well as DNA damage sites. Directly interacts with PCNA, as do POLD1 and POLD4; this interaction stimulates Pol-delta polymerase activity. POLD3 phosphorylation at Ser-454 impairs PCNA binding. Component of the DNA polymerase zeta complex (POLZ), which consists of REV3L, MAD2L2, POLD2 and POLD3, with REV3L bearing DNA polymerase catalytic activity. The DNA polymerase delta complex interacts with POLDIP2; this interaction is probably mediated through direct binding to POLD2. In terms of processing, ubiquitinated, but not targeted to the proteasome. Sumoylated. Sumoylation by SUMO3 may be predominant. Phosphorylation at Ser-454 is thought to decrease the affinity for PCNA and Pol-delta4 processivity. May be phosphorylated by CDK1-cyclin-A complex, as well as CDK2-cyclin-A and CDK2-cyclin-E complexes. PCNA interferes with CDK-cyclin phosphorylation.

It is found in the cytoplasm. The protein resides in the nucleus. Functionally, accessory component of both the DNA polymerase delta complex and the DNA polymerase zeta complex. As a component of the trimeric and tetrameric DNA polymerase delta complexes (Pol-delta3 and Pol-delta4, respectively), plays a role in high fidelity genome replication, including in lagging strand synthesis, and repair. Required for optimal Pol-delta activity. Stabilizes the Pol-delta complex and plays a major role in Pol-delta stimulation by PCNA. Pol-delta3 and Pol-delta4 are characterized by the absence or the presence of POLD4. They exhibit differences in catalytic activity. Most notably, Pol-delta3 shows higher proofreading activity than Pol-delta4. Although both Pol-delta3 and Pol-delta4 process Okazaki fragments in vitro, Pol-delta3 may also be better suited to fulfill this task, exhibiting near-absence of strand displacement activity compared to Pol-delta4 and stalling on encounter with the 5'-blocking oligonucleotides. Pol-delta3 idling process may avoid the formation of a gap, while maintaining a nick that can be readily ligated. Along with DNA polymerase kappa, DNA polymerase delta carries out approximately half of nucleotide excision repair (NER) synthesis following UV irradiation. In this context, POLD3, along with PCNA and RFC1-replication factor C complex, is required to recruit POLD1, the catalytic subunit of the polymerase delta complex, to DNA damage sites. Under conditions of DNA replication stress, required for the repair of broken replication forks through break-induced replication (BIR). Involved in the translesion synthesis (TLS) of templates carrying O6-methylguanine or abasic sites performed by Pol-delta4, independently of DNA polymerase zeta (REV3L) or eta (POLH). Facilitates abasic site bypass by DNA polymerase delta by promoting extension from the nucleotide inserted opposite the lesion. Also involved in TLS, as a component of the tetrameric DNA polymerase zeta complex. Along with POLD2, dramatically increases the efficiency and processivity of DNA synthesis of the DNA polymerase zeta complex compared to the minimal zeta complex, consisting of only REV3L and REV7. The protein is DNA polymerase delta subunit 3 (Pold3) of Mus musculus (Mouse).